Here is a 471-residue protein sequence, read N- to C-terminus: Tryptophanase (471 aa).

N6-acetyllysine occurs at positions 5, 115, and 156. K270 carries the N6-(pyridoxal phosphate)lysine modification. Position 450 is an N6-acetyllysine (K450).

This sequence belongs to the beta-eliminating lyase family. Homotetramer. Pyridoxal 5'-phosphate serves as cofactor.

It catalyses the reaction L-tryptophan + H2O = indole + pyruvate + NH4(+). Its pathway is amino-acid degradation; L-tryptophan degradation via pyruvate pathway; indole and pyruvate from L-tryptophan: step 1/1. This is Tryptophanase (tnaA) from Escherichia coli O157:H7.